Consider the following 396-residue polypeptide: MNNMAGNTPEVVDWFARARRLQKQQLHQLAQQGTLAGQISALVHMLQCERGASNIWLCSGGRLYAAECRAGAALVDEQLTRFYAALEPARDAASSALCWRIACAVWYLPQLAALRKRVRDREIAAEEATGQFSRIIRHLLNIVPQLNDSIDDPQIAGRMVALYSFMQGKELAGQERALGALGFARGQFSDELRQQLVDRIDGQQPCFDSFQALAQPPQTALFAEQCQASLEIEQLRRVACTRQPPADEGETALRWFCAQTQRLEQLRGVEELLIVDLLNAADALLEGEEPEAQLPPADWQEDSIALRLDKQLLPLVRQQAHELQQLSGQLASLKDALEERKLIEKAKSVLMTYQGMQEEQAWQALRKMAMDKNQRMVEIARALLTVKALWRVTPKE.

An NIT domain is found at 37 to 284 (GQISALVHML…VDLLNAADAL (248 aa)). The region spanning 323-384 (LQQLSGQLAS…RMVEIARALL (62 aa)) is the ANTAR domain.

Its function is as follows. Nitrate- and nitrite-responsive positive regulator for nasFEDCBA operon expression. NasR protein binds to the factor-independent terminator site located in the nasF operon leader RNA to effect transcription antitermination. In Klebsiella oxytoca, this protein is Nitrate regulatory protein (nasR).